The chain runs to 227 residues: Thymidine kinase 1 (227 aa).

ATP contacts are provided by residues 15–22 (GPMFSGKT), 47–49 (DTR), and 91–94 (DEGQ). E92 acts as the Proton acceptor in catalysis. Residue F122 coordinates substrate. Positions 147 and 150 each coordinate Zn(2+). Substrate is bound by residues 166–170 (IELIG) and Y175. Residues C179 and C182 each contribute to the Zn(2+) site. The span at 187-196 (QNEGNSTKPS) shows a compositional bias: polar residues. Residues 187 to 227 (QNEGNSTKPSKTARHSHSQSAPSVAPLAVNINPDDHLNNDY) are disordered.

This sequence belongs to the thymidine kinase family. Interacts with calmodulin in the presence of Ca(2+).

It catalyses the reaction thymidine + ATP = dTMP + ADP + H(+). This is Thymidine kinase 1 from Dictyostelium discoideum (Social amoeba).